The primary structure comprises 336 residues: Ferredoxin--NADP reductase 1 (336 aa).

FAD contacts are provided by E37, K45, F50, V90, L125, D287, and T328.

The protein belongs to the ferredoxin--NADP reductase type 2 family. In terms of assembly, homodimer. FAD serves as cofactor.

The catalysed reaction is 2 reduced [2Fe-2S]-[ferredoxin] + NADP(+) + H(+) = 2 oxidized [2Fe-2S]-[ferredoxin] + NADPH. The chain is Ferredoxin--NADP reductase 1 (ycgT) from Bacillus subtilis (strain 168).